We begin with the raw amino-acid sequence, 178 residues long: Deoxyuridine 5'-triphosphate nucleotidohydrolase (178 aa).

Belongs to the dUTPase family. It depends on Mg(2+) as a cofactor.

The enzyme catalyses dUTP + H2O = dUMP + diphosphate + H(+). It functions in the pathway pyrimidine metabolism; dUMP biosynthesis; dUMP from dCTP (dUTP route): step 2/2. Functionally, this enzyme is involved in nucleotide metabolism: it produces dUMP, the immediate precursor of thymidine nucleotides and it decreases the intracellular concentration of dUTP so that uracil cannot be incorporated into DNA. In Fowl adenovirus A serotype 1 (strain CELO / Phelps) (FAdV-1), this protein is Deoxyuridine 5'-triphosphate nucleotidohydrolase.